The primary structure comprises 1225 residues: uncharacterized protein (1225 aa).

Positions 1 to 15 are enriched in polar residues; it reads MSSQAEPSKGASNAD. The disordered stretch occupies residues 1–104; the sequence is MSSQAEPSKG…VDGVPTRPVS (104 aa). The span at 16 to 25 shows a compositional bias: basic and acidic residues; sequence PNEKVEKMHL. Polar residues predominate over residues 43-65; that stretch reads ASPSDKNNLNPQSAGVSEVQVQD. A helical membrane pass occupies residues 167 to 187; the sequence is FLFGYLRFGFLSLFIIMAVCI. In terms of domain architecture, SMP-LTD spans 217–422; sequence DSETVTWLNT…SPNVYELDIE (206 aa). 3 C2 domains span residues 413–534, 559–668, and 685–803; these read SPNV…NDAF, DSGE…LLWF, and KPAQ…GALM. Serine 843 is subject to Phosphoserine. The segment at 867-890 is disordered; the sequence is PESQKTPTAVDNTSTSRGSTSVKT. The segment covering 869 to 890 has biased composition (polar residues); that stretch reads SQKTPTAVDNTSTSRGSTSVKT. Residues 1019-1137 enclose the C2 4 domain; that stretch reads RLTPVPVKLE…QQQQQTNYEI (119 aa). Positions 1053, 1059, 1107, 1109, and 1115 each coordinate Ca(2+).

Ca(2+) serves as cofactor.

The protein resides in the endoplasmic reticulum membrane. This is an uncharacterized protein from Schizosaccharomyces pombe (strain 972 / ATCC 24843) (Fission yeast).